A 181-amino-acid polypeptide reads, in one-letter code: Malignant T-cell-amplified sequence 1-A (181 aa).

A PUA domain is found at 92 to 171 (LPHQQVDKGA…IGIENIHYLN (80 aa)).

Belongs to the MCTS1 family.

It is found in the cytoplasm. Functionally, plays a role as translation enhancer and involved in cell cycle regulation. This chain is Malignant T-cell-amplified sequence 1-A (mcts1-a), found in Xenopus laevis (African clawed frog).